The sequence spans 401 residues: Imidazolonepropionase (401 aa).

Positions 66 and 68 each coordinate Fe(3+). The Zn(2+) site is built by His-66 and His-68. Residues Arg-75, Tyr-138, and His-171 each contribute to the 4-imidazolone-5-propanoate site. Position 138 (Tyr-138) interacts with N-formimidoyl-L-glutamate. His-236 contributes to the Fe(3+) binding site. A Zn(2+)-binding site is contributed by His-236. 4-imidazolone-5-propanoate is bound at residue Gln-239. Fe(3+) is bound at residue Asp-311. Residue Asp-311 coordinates Zn(2+). The N-formimidoyl-L-glutamate site is built by Asn-313 and Gly-315. Thr-316 contacts 4-imidazolone-5-propanoate.

The protein belongs to the metallo-dependent hydrolases superfamily. HutI family. Zn(2+) serves as cofactor. Fe(3+) is required as a cofactor.

Its subcellular location is the cytoplasm. It carries out the reaction 4-imidazolone-5-propanoate + H2O = N-formimidoyl-L-glutamate. Its pathway is amino-acid degradation; L-histidine degradation into L-glutamate; N-formimidoyl-L-glutamate from L-histidine: step 3/3. Functionally, catalyzes the hydrolytic cleavage of the carbon-nitrogen bond in imidazolone-5-propanoate to yield N-formimidoyl-L-glutamate. It is the third step in the universal histidine degradation pathway. The sequence is that of Imidazolonepropionase from Pseudomonas savastanoi pv. phaseolicola (strain 1448A / Race 6) (Pseudomonas syringae pv. phaseolicola (strain 1448A / Race 6)).